A 444-amino-acid polypeptide reads, in one-letter code: Proline--tRNA ligase (444 aa).

It belongs to the class-II aminoacyl-tRNA synthetase family. ProS type 2 subfamily. Homodimer.

It localises to the cytoplasm. It carries out the reaction tRNA(Pro) + L-proline + ATP = L-prolyl-tRNA(Pro) + AMP + diphosphate. Functionally, catalyzes the attachment of proline to tRNA(Pro) in a two-step reaction: proline is first activated by ATP to form Pro-AMP and then transferred to the acceptor end of tRNA(Pro). The chain is Proline--tRNA ligase from Bradyrhizobium sp. (strain BTAi1 / ATCC BAA-1182).